A 258-amino-acid polypeptide reads, in one-letter code: NAD(P)H-hydrate epimerase (258 aa).

The YjeF N-terminal domain occupies 15–244; that stretch reads AFQLDQELMS…RIAKEYGIED (230 aa). 75–79 provides a ligand contact to (6S)-NADPHX; it reads NNGGD. K(+) contacts are provided by N76 and D145. Residues 149–155 and D181 contribute to the (6S)-NADPHX site; that span reads GFSFKPP. K(+) is bound at residue S184.

This sequence belongs to the NnrE/AIBP family. K(+) is required as a cofactor.

Its subcellular location is the cytoplasm. The protein resides in the mitochondrion. The catalysed reaction is (6R)-NADHX = (6S)-NADHX. It catalyses the reaction (6R)-NADPHX = (6S)-NADPHX. In terms of biological role, catalyzes the epimerization of the S- and R-forms of NAD(P)HX, a damaged form of NAD(P)H that is a result of enzymatic or heat-dependent hydration. This is a prerequisite for the S-specific NAD(P)H-hydrate dehydratase to allow the repair of both epimers of NAD(P)HX. This Candida albicans (strain WO-1) (Yeast) protein is NAD(P)H-hydrate epimerase.